Consider the following 236-residue polypeptide: Small ribosomal subunit protein uS3 (236 aa).

A KH type-2 domain is found at 39 to 107 (IREILHKELK…DVVINIVEIR (69 aa)). Residues 213–236 (MAQDKRMNEGGGESPSPRSRRDAA) form a disordered region.

Belongs to the universal ribosomal protein uS3 family. Part of the 30S ribosomal subunit. Forms a tight complex with proteins S10 and S14.

Binds the lower part of the 30S subunit head. Binds mRNA in the 70S ribosome, positioning it for translation. The chain is Small ribosomal subunit protein uS3 from Bradyrhizobium sp. (strain ORS 278).